The sequence spans 712 residues: Polyribonucleotide nucleotidyltransferase (712 aa).

Positions 488 and 494 each coordinate Mg(2+). Positions 555–614 (PKIETINIPTDKIREVIGSGGKVIREIVATTGAKVDINDDGVVKVSASDGAKIKAAIDWI) constitute a KH domain. The region spanning 624-692 (GKIYDGKVVK…DRGKTKLSMK (69 aa)) is the S1 motif domain.

This sequence belongs to the polyribonucleotide nucleotidyltransferase family. Mg(2+) is required as a cofactor.

Its subcellular location is the cytoplasm. The enzyme catalyses RNA(n+1) + phosphate = RNA(n) + a ribonucleoside 5'-diphosphate. In terms of biological role, involved in mRNA degradation. Catalyzes the phosphorolysis of single-stranded polyribonucleotides processively in the 3'- to 5'-direction. This is Polyribonucleotide nucleotidyltransferase from Caulobacter vibrioides (strain NA1000 / CB15N) (Caulobacter crescentus).